Consider the following 414-residue polypeptide: Serine-type anaerobic sulfatase-maturating enzyme (414 aa).

The 246-residue stretch at 5–250 folds into the Radical SAM core domain; it reads TYAPFAKPLY…LCTIFDEWVK (246 aa). [4Fe-4S] cluster is bound by residues Cys-24 and Cys-28. Tyr-30 is an S-adenosyl-L-methionine binding site. Residue Cys-31 coordinates [4Fe-4S] cluster. Gly-76, Ser-131, and Arg-143 together coordinate S-adenosyl-L-methionine. Residues Cys-276, Cys-282, and Cys-297 each coordinate [4Fe-4S] cluster. Asp-298 acts as the Proton acceptor in catalysis. Residues Cys-339, Cys-342, Cys-348, Cys-352, and Cys-371 each contribute to the [4Fe-4S] cluster site.

Belongs to the radical SAM superfamily. Anaerobic sulfatase-maturating enzyme family. Requires [4Fe-4S] cluster as cofactor.

The enzyme catalyses L-seryl-[sulfatase] + S-adenosyl-L-methionine = 3-oxo-L-alanyl-[sulfatase] + 5'-deoxyadenosine + L-methionine + H(+). The protein operates within protein modification; sulfatase oxidation. Its function is as follows. Involved in 'Ser-type' sulfatase maturation under anaerobic conditions. Links the heparin and the chondroitin sulfate utilization pathways which contribute to the colonization of the intestinal tract. May catalyze the activation of chondro-6-sulfatase, i.e. the post-translational modification of a specific serine residue into 3-oxoalanine (also known as C(alpha)-formylglycine (FGly)), by a free radical chemical mechanism initiated via the reductive cleavage of S-adenosyl-L-methionine (SAM). Is also able to oxidize a cysteine residue in a synthetic substrate to FGly in vitro, but not in a recombinant Cys-type sulfatase in vivo. But since B.thetaiotaomicron possesses only Ser-type sulfatases, the oxidation of serine residues to FGly is the sole physiological activity. This chain is Serine-type anaerobic sulfatase-maturating enzyme (chuR), found in Bacteroides thetaiotaomicron (strain ATCC 29148 / DSM 2079 / JCM 5827 / CCUG 10774 / NCTC 10582 / VPI-5482 / E50).